The primary structure comprises 234 residues: uncharacterized protein (234 aa).

An HTH tetR-type domain is found at 24-83; sequence VERRNELVDGTIEAIRRHGRFLSMDEIAAEIGVSKTVLYRYFVDKNDLTTAVMMRFTQTT. The H-T-H motif DNA-binding region spans 46-65; sequence SMDEIAAEIGVSKTVLYRYF.

This is an uncharacterized protein from Mycobacterium tuberculosis (strain CDC 1551 / Oshkosh).